A 362-amino-acid polypeptide reads, in one-letter code: Golgi-resident adenosine 3',5'-bisphosphate 3'-phosphatase (362 aa).

Position 1 is an N-acetylmethionine (Met-1). The Cytoplasmic segment spans residues 1-12 (MAPMGIRLSPLG). The chain crosses the membrane as a helical span at residues 13–33 (VAVFCLLGLGVLYHLYSGFLA). Residues 34–362 (GRFSLFGLGG…LPDLEKTGHK (329 aa)) lie on the Lumenal side of the membrane. A disordered region spans residues 88–109 (RESNVLHEKSKGKTREGADDKM). Asp-113 functions as the Proton acceptor in the catalytic mechanism. Positions 136, 177, 179, and 180 each coordinate Mg(2+). The active-site Proton acceptor is Thr-182. 2 residues coordinate AMP: Ser-245 and His-248. N-linked (GlcNAc...) asparagine glycosylation is present at Asn-262. Positions 271 and 275 each coordinate AMP. Asp-303 serves as a coordination point for Mg(2+).

It belongs to the inositol monophosphatase superfamily. Mg(2+) serves as cofactor. In terms of processing, contains N-linked glycan resistant to endoglycosydase H.

It localises to the golgi apparatus. The protein resides in the trans-Golgi network membrane. It carries out the reaction adenosine 3',5'-bisphosphate + H2O = AMP + phosphate. The protein operates within sulfur metabolism. Its activity is regulated as follows. Strongly inhibited by lithium. In terms of biological role, exhibits 3'-nucleotidase activity toward adenosine 3',5'-bisphosphate (PAP), namely hydrolyzes adenosine 3',5'-bisphosphate into adenosine 5'-monophosphate (AMP) and a phosphate. May play a role in the formation of skeletal elements derived through endochondral ossification, possibly by clearing adenosine 3',5'-bisphosphate produced by Golgi sulfotransferases during glycosaminoglycan sulfation. Has no activity toward 3'-phosphoadenosine 5'-phosphosulfate (PAPS) or inositol phosphate (IP) substrates including I(1)P, I(1,4)P2, I(1,3,4)P3, I(1,4,5)P3 and I(1,3,4,5)P4. In Bos taurus (Bovine), this protein is Golgi-resident adenosine 3',5'-bisphosphate 3'-phosphatase (BPNT2).